The following is a 150-amino-acid chain: Glycophorin-A (150 aa).

Positions 1–19 (MYGKIIFVLLLSEIVSISA) are cleaved as a signal peptide. Topologically, residues 20–91 (LSTTEVAMHT…QLAHHFSEPE (72 aa)) are extracellular. The O-linked (GalNAc...) serine glycan is linked to serine 21. Residues threonine 22, threonine 23, and threonine 29 are each glycosylated (O-linked (GalNAc...) threonine). The O-linked (GalNAc...) serine glycan is linked to serine 30. The O-linked (GalNAc...) threonine glycan is linked to threonine 31. The O-linked (GalNAc...) serine glycan is linked to serine 32. An O-linked (GalNAc...) threonine glycan is attached at threonine 36. Serine 38 and serine 41 each carry an O-linked (GalNAc...) serine glycan. O-linked (GalNAc...) threonine glycosylation occurs at threonine 44. Residue asparagine 45 is glycosylated (N-linked (GlcNAc...) asparagine). Threonine 52 and threonine 56 each carry an O-linked (GalNAc...) threonine glycan. Residues serine 63 and serine 66 are each glycosylated (O-linked (GalNAc...) serine). A glycan (O-linked (GalNAc...) threonine) is linked at threonine 69. Residues 92–114 (ITLIIFGVMAGVIGTILLISYGI) form a helical membrane-spanning segment. Residues 115-150 (RRLIKKSPSDVKPLPSPDTDVPLSSVEIENPETSDQ) lie on the Cytoplasmic side of the membrane. Residues 121–150 (SPSDVKPLPSPDTDVPLSSVEIENPETSDQ) form a disordered region. The residue at position 133 (threonine 133) is a Phosphothreonine. Serine 138 and serine 148 each carry phosphoserine.

This sequence belongs to the glycophorin A family. As to quaternary structure, homodimer. Component of the ankyrin-1 complex in the erythrocyte, composed of ANK1, RHCE, RHAG, SLC4A1, EPB42, GYPA, GYPB and AQP1. Interacts with SLC4A1; a GYPA monomer is bound at each end of the SLC4A1 dimer forming a heterotetramer. In terms of assembly, (Microbial infection) Interacts with Streptococcus gordonii hsa protein. (Microbial infection) Interacts (in a sialic acid-independent manner) with P.falciparum MSP1 subunit p83. The major O-linked glycan are NeuAc-alpha-(2-3)-Gal-beta-(1-3)-[NeuAc-alpha-(2-6)]-GalNAcOH (about 78 %) and NeuAc-alpha-(2-3)-Gal-beta-(1-3)-GalNAcOH (17 %). Minor O-glycans (5 %) include NeuAc-alpha-(2-3)-Gal-beta-(1-3)-[NeuAc-alpha-(2-6)]-GalNAcOH NeuAc-alpha-(2-8)-NeuAc-alpha-(2-3)-Gal-beta-(1-3)-GalNAcOH. About 1% of all O-linked glycans carry blood group A, B and H determinants. They derive from a type-2 precursor core structure, Gal-beta-(1,3)-GlcNAc-beta-1-R, and the antigens are synthesized by addition of fucose (H antigen-specific) and then N-acetylgalactosamine (A antigen-specific) or galactose (B antigen-specific). Specifically O-linked-glycans are NeuAc-alpha-(2-3)-Gal-beta-(1-3)-GalNAcOH-(6-1)-GlcNAc-beta-(4-1)-[Fuc-alpha-(1-2)]-Gal-beta-(3-1)-GalNAc-alpha (about 1%, B antigen-specific) and NeuAc-alpha-(2-3)-Gal-beta-(1-3)-GalNAcOH-(6-1)-GlcNAc-beta-(4-1)-[Fuc-alpha-(1-2)]-Gal-beta (1 %, O antigen-, A antigen- and B antigen-specific).

It localises to the cell membrane. In terms of biological role, component of the ankyrin-1 complex, a multiprotein complex involved in the stability and shape of the erythrocyte membrane. Glycophorin A is the major intrinsic membrane protein of the erythrocyte. The N-terminal glycosylated segment, which lies outside the erythrocyte membrane, has MN blood group receptors. Appears to be important for the function of SLC4A1 and is required for high activity of SLC4A1. May be involved in translocation of SLC4A1 to the plasma membrane. (Microbial infection) Appears to be a receptor for Hepatitis A virus (HAV). Its function is as follows. (Microbial infection) Receptor for P.falciparum erythrocyte-binding antigen 175 (EBA-175); binding of EBA-175 is dependent on sialic acid residues of the O-linked glycans. The polypeptide is Glycophorin-A (Homo sapiens (Human)).